Here is a 366-residue protein sequence, read N- to C-terminus: Histidinol-phosphate aminotransferase 2 (366 aa).

Over residues 1–11 (MQVKDQLSSLQ) the composition is skewed to polar residues. Positions 1 to 21 (MQVKDQLSSLQPYKPGKSPEQ) are disordered. At Lys-222 the chain carries N6-(pyridoxal phosphate)lysine.

The protein belongs to the class-II pyridoxal-phosphate-dependent aminotransferase family. Histidinol-phosphate aminotransferase subfamily. As to quaternary structure, homodimer. Requires pyridoxal 5'-phosphate as cofactor.

The enzyme catalyses L-histidinol phosphate + 2-oxoglutarate = 3-(imidazol-4-yl)-2-oxopropyl phosphate + L-glutamate. The protein operates within amino-acid biosynthesis; L-histidine biosynthesis; L-histidine from 5-phospho-alpha-D-ribose 1-diphosphate: step 7/9. In Bacillus cereus (strain ATCC 14579 / DSM 31 / CCUG 7414 / JCM 2152 / NBRC 15305 / NCIMB 9373 / NCTC 2599 / NRRL B-3711), this protein is Histidinol-phosphate aminotransferase 2 (hisC2).